A 141-amino-acid polypeptide reads, in one-letter code: ATP synthase epsilon chain (141 aa).

It belongs to the ATPase epsilon chain family. In terms of assembly, F-type ATPases have 2 components, CF(1) - the catalytic core - and CF(0) - the membrane proton channel. CF(1) has five subunits: alpha(3), beta(3), gamma(1), delta(1), epsilon(1). CF(0) has three main subunits: a, b and c.

Its subcellular location is the cell inner membrane. Its function is as follows. Produces ATP from ADP in the presence of a proton gradient across the membrane. This Burkholderia multivorans (strain ATCC 17616 / 249) protein is ATP synthase epsilon chain.